Consider the following 201-residue polypeptide: Probable molybdenum cofactor guanylyltransferase (201 aa).

GTP is bound by residues 6 to 8 (LAG), Lys-18, Asp-65, and Asp-97. Asp-97 is a Mg(2+) binding site.

It belongs to the MobA family. Mg(2+) serves as cofactor.

The protein resides in the cytoplasm. It carries out the reaction Mo-molybdopterin + GTP + H(+) = Mo-molybdopterin guanine dinucleotide + diphosphate. Its function is as follows. Transfers a GMP moiety from GTP to Mo-molybdopterin (Mo-MPT) cofactor (Moco or molybdenum cofactor) to form Mo-molybdopterin guanine dinucleotide (Mo-MGD) cofactor. This Staphylococcus epidermidis (strain ATCC 35984 / DSM 28319 / BCRC 17069 / CCUG 31568 / BM 3577 / RP62A) protein is Probable molybdenum cofactor guanylyltransferase.